Here is a 185-residue protein sequence, read N- to C-terminus: MSELYKNIVLCQNGDKKAIEYIINRFEILINKYKMSFLKEIHFNSYDIEDNKQDLIVSLINIVNKIPIDNPQFENEGCLVNYIYKSILNSRKDMYINKNIKRYFIESQSLSSMVEFKDKPLVKYIESNIEIEDMLKCLTEKEQKVIKYKFLNDKSEVEIAEIMGTSRQWINRIKNTALKKLKENI.

Its function is as follows. May have a role in bacteriocin secretion or immunity. The chain is Bacteriocin UviA (uviA) from Clostridium perfringens.